The following is a 157-amino-acid chain: MAKKDKKPKVNTIVTKDGESLKVFEDLNDFEMFIKNETEDEEFDHIHCKLTYYPPFVLHESHDDPEKIKDTNNSHNKKFVRHLHQHVEKHLLKDIKEALHKPELKFHDKSKDETFEHIVWHYGEETEYHDRKFRIQVTVTCNHDDAMVDVDYKTIPL.

This sequence belongs to the RGI1 family.

It localises to the cell membrane. In terms of biological role, involved in the control of energetic metabolism and significantly contribute to cell fitness, especially under respiratory growth conditions. The polypeptide is Respiratory growth induced protein 1 (RGI1) (Candida glabrata (strain ATCC 2001 / BCRC 20586 / JCM 3761 / NBRC 0622 / NRRL Y-65 / CBS 138) (Yeast)).